We begin with the raw amino-acid sequence, 899 residues long: CNK3/IPCEF1 fusion protein (899 aa).

Residues 7–72 (WSPKQVVDWT…LEAVDLLCAL (66 aa)) enclose the SAM domain. The 95-residue stretch at 80-174 (NMKNLVLKLR…TTVQKDCFVA (95 aa)) folds into the CRIC domain. Residues 211–293 (EVHLPNIKPG…GVVLLLKKRP (83 aa)) enclose the PDZ domain. Disordered stretches follow at residues 309–334 (WKPP…DTSL) and 347–390 (PPPP…FLDQ). The DUF1170 domain occupies 332-457 (TSLKKEKSAI…ARPRGHGRKA (126 aa)). Phosphoserine is present on serine 383. Residues 503–602 (HADCQGWLYK…WLNKLGSAVI (100 aa)) enclose the PH domain. 3 disordered regions span residues 605 to 687 (ESTT…PDTV), 735 to 770 (LSSD…TKVS), and 868 to 899 (QQQR…ENSI). The span at 613-624 (CYSESEQEDPEI) shows a compositional bias: acidic residues. Positions 634–662 (ASQTQSLTAQQASSSSPSLSGTSYSFSSL) are enriched in low complexity. Positions 663–676 (ENTVKTPSSFPSSL) are enriched in polar residues. Positions 735–745 (LSSDDTSSLSS) are enriched in low complexity. The span at 761 to 770 (IMDKEETKVS) shows a compositional bias: basic and acidic residues. Residues 851–899 (KYREWKVMNTLLIQDIYQQQRASPAPDDTDDTPQELKKSPSSPSVENSI) are required for interaction with CYTH2. Phosphoserine is present on serine 873. The span at 889 to 899 (SPSSPSVENSI) shows a compositional bias: polar residues.

The protein belongs to the CNKSR family.

Functionally, required for hepatocyte growth factor (HGF)-dependent activation of Arf6 and HGF-stimulated cell migration. The protein is CNK3/IPCEF1 fusion protein (CNK3/IPCEF1) of Homo sapiens (Human).